The chain runs to 229 residues: Non-structural protein P8 (229 aa).

Residues 13–31 (KMKHNQDRVEEPSQVRVDD) show a composition bias toward basic and acidic residues. Positions 13 to 46 (KMKHNQDRVEEPSQVRVDDTISQPPRYAPSAPMP) are disordered. Residues 36–46 (PPRYAPSAPMP) are compositionally biased toward low complexity. 2 helical membrane-spanning segments follow: residues 119–139 (IIHTTLLVAAVVALLTSVCTL) and 162–182 (SLNPMLGVVNLGATFLMMVCA).

It belongs to the orbivirus NS3 family. In terms of assembly, forms homooligomers via coiled-coil motif. Interacts with host OPTN; this interaction inhibits innate immune response.

It localises to the host cell membrane. The protein localises to the host Golgi apparatus. Functionally, plays a role in the inhibition of host innate immune response. Interacts with host OPTN and thus inhibits the recruitment of TBK1 to the host Golgi apparatus. In turn, downstream partner IRF3 cannot be activated and IFN-beta production is impaired. In terms of biological role, facilitates viral particle release either by increasing plasma membrane permeability through a viroporin-like activity or by viral budding. This chain is Non-structural protein P8 (Segment-10), found in Antilocapra americana (Pronghorn).